A 354-amino-acid chain; its full sequence is Holliday junction branch migration complex subunit RuvB (354 aa).

Positions 1–38 are disordered; sequence MSDFERTEFELPPGVGHSQNEDLNPQQTAGDSDIDTSL. A large ATPase domain (RuvB-L) region spans residues 2–199; it reads SDFERTEFEL…FGFTAQMEFY (198 aa). Polar residues predominate over residues 17–30; it reads HSQNEDLNPQQTAG. Residues Leu-38, Arg-39, Gly-80, Lys-83, Thr-84, Thr-85, 146–148, Arg-189, Tyr-199, and Arg-236 each bind ATP; that span reads EDF. Mg(2+) is bound at residue Thr-84. The small ATPAse domain (RuvB-S) stretch occupies residues 200–270; the sequence is DTADLTRVVT…VARAALLVFD (71 aa). Residues 273–354 form a head domain (RuvB-H) region; the sequence is ESGLDRLDRA…LEPPEGTIGL (82 aa). DNA-binding residues include Arg-328 and Arg-333.

Belongs to the RuvB family. As to quaternary structure, homohexamer. Forms an RuvA(8)-RuvB(12)-Holliday junction (HJ) complex. HJ DNA is sandwiched between 2 RuvA tetramers; dsDNA enters through RuvA and exits via RuvB. An RuvB hexamer assembles on each DNA strand where it exits the tetramer. Each RuvB hexamer is contacted by two RuvA subunits (via domain III) on 2 adjacent RuvB subunits; this complex drives branch migration. In the full resolvosome a probable DNA-RuvA(4)-RuvB(12)-RuvC(2) complex forms which resolves the HJ.

It localises to the cytoplasm. It carries out the reaction ATP + H2O = ADP + phosphate + H(+). The RuvA-RuvB-RuvC complex processes Holliday junction (HJ) DNA during genetic recombination and DNA repair, while the RuvA-RuvB complex plays an important role in the rescue of blocked DNA replication forks via replication fork reversal (RFR). RuvA specifically binds to HJ cruciform DNA, conferring on it an open structure. The RuvB hexamer acts as an ATP-dependent pump, pulling dsDNA into and through the RuvAB complex. RuvB forms 2 homohexamers on either side of HJ DNA bound by 1 or 2 RuvA tetramers; 4 subunits per hexamer contact DNA at a time. Coordinated motions by a converter formed by DNA-disengaged RuvB subunits stimulates ATP hydrolysis and nucleotide exchange. Immobilization of the converter enables RuvB to convert the ATP-contained energy into a lever motion, pulling 2 nucleotides of DNA out of the RuvA tetramer per ATP hydrolyzed, thus driving DNA branch migration. The RuvB motors rotate together with the DNA substrate, which together with the progressing nucleotide cycle form the mechanistic basis for DNA recombination by continuous HJ branch migration. Branch migration allows RuvC to scan DNA until it finds its consensus sequence, where it cleaves and resolves cruciform DNA. This Corynebacterium jeikeium (strain K411) protein is Holliday junction branch migration complex subunit RuvB.